The primary structure comprises 241 residues: Uridylate kinase (241 aa).

ATP is bound at residue 14–17; sequence KASG. The tract at residues 22 to 27 is involved in allosteric activation by GTP; it reads GDQGFG. G56 is a binding site for UMP. G57 and R61 together coordinate ATP. UMP is bound by residues D76 and 137-144; that span reads TGNPFFTT. Positions 164, 165, 170, and 173 each coordinate ATP.

The protein belongs to the UMP kinase family. In terms of assembly, homohexamer.

The protein localises to the cytoplasm. It catalyses the reaction UMP + ATP = UDP + ADP. It functions in the pathway pyrimidine metabolism; CTP biosynthesis via de novo pathway; UDP from UMP (UMPK route): step 1/1. Its activity is regulated as follows. Allosterically activated by GTP. Inhibited by UTP. Its function is as follows. Catalyzes the reversible phosphorylation of UMP to UDP. In Agrobacterium fabrum (strain C58 / ATCC 33970) (Agrobacterium tumefaciens (strain C58)), this protein is Uridylate kinase.